The following is a 390-amino-acid chain: RNA polymerase sigma factor SigA (390 aa).

Positions 48 to 57 (FLEPQTDEDD) are enriched in acidic residues. Residues 48–75 (FLEPQTDEDDAKSGKAAKSRRRTQSKKK) form a disordered region. Over residues 62 to 75 (KAAKSRRRTQSKKK) the composition is skewed to basic residues. The tract at residues 158–228 (MVQSNLRLVV…TRAIADQSRT (71 aa)) is sigma-70 factor domain-2. An Interaction with polymerase core subunit RpoC motif is present at residues 182-185 (DLIQ). Residues 237 to 312 (ETISRIKKTT…ESDGETPEDQ (76 aa)) are sigma-70 factor domain-3. Residues 325 to 378 (VLDSLSPRERDVLRLRYGLDDGRMKTLEEIGQIFNVTRERIRQIEAKALRKLRH) are sigma-70 factor domain-4. The H-T-H motif DNA-binding region spans 351–370 (LEEIGQIFNVTRERIRQIEA).

It belongs to the sigma-70 factor family. RpoD/SigA subfamily. As to quaternary structure, interacts transiently with the RNA polymerase catalytic core.

The protein localises to the cytoplasm. Its function is as follows. Sigma factors are initiation factors that promote the attachment of RNA polymerase to specific initiation sites and are then released. This sigma factor is the primary sigma factor during exponential growth. The protein is RNA polymerase sigma factor SigA of Nostoc sp. (strain PCC 7120 / SAG 25.82 / UTEX 2576).